Reading from the N-terminus, the 764-residue chain is Calpain-like protease palB/RIM13 (764 aa).

Positions 95-368 (GEFYPPLTVY…FKYFYINWNP (274 aa)) constitute a Calpain catalytic domain. Active-site residues include C165, H318, and N336.

Belongs to the peptidase C2 family. PalB/RIM13 subfamily.

Functionally, required for the proteolytic cleavage of the transcription factor RIM101 in response to alkaline ambient pH. This is Calpain-like protease palB/RIM13 from Debaryomyces hansenii (strain ATCC 36239 / CBS 767 / BCRC 21394 / JCM 1990 / NBRC 0083 / IGC 2968) (Yeast).